The following is a 210-amino-acid chain: MSAALLSLVQWLSPAFPTGAFAYSHGLEWAISEGEVRDAASARRWIADVLAFGAGRTDAILLAHALRGHDPEALSDLARALAPAAERLRETEEQGAAFAATVAALTGRDLPPRPLPVALGQAAAPLGLPVAEVLALMLHAFAANLVSAAVRFVPLGQTEGQATLAALHPLIGEIAAESAEAPLDALGSAALRGDLAAMRHETQEVRIFKT.

The protein belongs to the UreF family. UreD, UreF and UreG form a complex that acts as a GTP-hydrolysis-dependent molecular chaperone, activating the urease apoprotein by helping to assemble the nickel containing metallocenter of UreC. The UreE protein probably delivers the nickel.

The protein localises to the cytoplasm. Required for maturation of urease via the functional incorporation of the urease nickel metallocenter. The polypeptide is Urease accessory protein UreF (Cereibacter sphaeroides (strain ATCC 17029 / ATH 2.4.9) (Rhodobacter sphaeroides)).